The sequence spans 100 residues: Small ribosomal subunit protein uS14c (100 aa).

The protein belongs to the universal ribosomal protein uS14 family. In terms of assembly, part of the 30S ribosomal subunit.

The protein resides in the plastid. It is found in the chloroplast. Its function is as follows. Binds 16S rRNA, required for the assembly of 30S particles. This Staurastrum punctulatum (Green alga) protein is Small ribosomal subunit protein uS14c.